The chain runs to 159 residues: 6,7-dimethyl-8-ribityllumazine synthase (159 aa).

5-amino-6-(D-ribitylamino)uracil-binding positions include Phe-22, 57-59, and 81-83; these read AVE and AVI. (2S)-2-hydroxy-3-oxobutyl phosphate is bound at residue 86 to 87; it reads GT. The Proton donor role is filled by His-89. Phe-114 is a 5-amino-6-(D-ribitylamino)uracil binding site. Arg-128 contributes to the (2S)-2-hydroxy-3-oxobutyl phosphate binding site.

This sequence belongs to the DMRL synthase family. In terms of assembly, forms an icosahedral capsid composed of 60 subunits, arranged as a dodecamer of pentamers.

It carries out the reaction (2S)-2-hydroxy-3-oxobutyl phosphate + 5-amino-6-(D-ribitylamino)uracil = 6,7-dimethyl-8-(1-D-ribityl)lumazine + phosphate + 2 H2O + H(+). Its pathway is cofactor biosynthesis; riboflavin biosynthesis; riboflavin from 2-hydroxy-3-oxobutyl phosphate and 5-amino-6-(D-ribitylamino)uracil: step 1/2. Catalyzes the formation of 6,7-dimethyl-8-ribityllumazine by condensation of 5-amino-6-(D-ribitylamino)uracil with 3,4-dihydroxy-2-butanone 4-phosphate. This is the penultimate step in the biosynthesis of riboflavin. The sequence is that of 6,7-dimethyl-8-ribityllumazine synthase from Shewanella denitrificans (strain OS217 / ATCC BAA-1090 / DSM 15013).